The chain runs to 415 residues: GPI mannosyltransferase 1 (415 aa).

9 helical membrane-spanning segments follow: residues 8–28, 82–102, 134–154, 158–178, 222–242, 284–304, 329–349, 354–374, and 387–407; these read PSLVFGAAIVLRAILLVYGAW, FFSFGKVLFALSDVVAGWLIA, TRGSSEGLLCVLVIALLWAVL, ITLAGVLLGLSVHFKIYPFVY, LLLTTTALATFSGLNISMYIL, FESLAFIPQLLLSVVVIPIVL, SQYFLWYLIFLPFYLPSSSLM, LGITVTALWVIAQALWLQQGY, and GLFLASLGFFAVNIWILGIII.

The protein belongs to the PIGM family.

The protein localises to the endoplasmic reticulum membrane. It functions in the pathway glycolipid biosynthesis; glycosylphosphatidylinositol-anchor biosynthesis. Its function is as follows. Mannosyltransferase involved in glycosylphosphatidylinositol-anchor biosynthesis. Transfers the first alpha-1,4-mannose to GlcN-acyl-PI during GPI precursor assembly. Required for cell wall integrity. The protein is GPI mannosyltransferase 1 (gpi14) of Aspergillus oryzae (strain ATCC 42149 / RIB 40) (Yellow koji mold).